The primary structure comprises 212 residues: uncharacterized protein (212 aa).

Helical transmembrane passes span 34-54 (IFGIVLVILSLPSALPIPAPG), 59-79 (FGVLIFLVAIQLMAGRQELWL), 126-146 (ILMGITVGSMAISMMIPIPGT), and 171-191 (AGMIFSVLIGVLMVSVIYVFF).

This sequence to R.meliloti ExoD.

Its subcellular location is the cell membrane. This is an uncharacterized protein from Synechocystis sp. (strain ATCC 27184 / PCC 6803 / Kazusa).